A 318-amino-acid chain; its full sequence is Small ribosomal subunit protein uS3 (318 aa).

One can recognise a KH type-2 domain in the interval 17–86; that stretch reads MDEYFAEQLS…NPQIDAQEVK (70 aa). A compositionally biased stretch (basic and acidic residues) spans 198–229; the sequence is SVEVEEPAEKPAEKPAEKPAEKAAAPKKEAAK. A disordered region spans residues 198–275; that stretch reads SVEVEEPAEK…VQAETSEEIE (78 aa). The span at 234–250 shows a compositional bias: pro residues; the sequence is APAPEAPAPAPEAPAPA. Positions 253-275 are enriched in acidic residues; that stretch reads EEAEVAEPEEAEEVQAETSEEIE.

The protein belongs to the universal ribosomal protein uS3 family. Part of the 30S ribosomal subunit.

Functionally, binds the lower part of the 30S subunit head. This chain is Small ribosomal subunit protein uS3, found in Methanosarcina acetivorans (strain ATCC 35395 / DSM 2834 / JCM 12185 / C2A).